A 540-amino-acid chain; its full sequence is MNSTGHLQDAPNATSLHVPHSQEGNSTSLQEGLQDLIHTATLVTCTFLLAVIFCLGSYGNFIVFLSFFDPAFRKFRTNFDFMILNLSFCDLFICGVTAPMFTFVLFFSSASSIPDAFCFTFHLTSSGFIIMSLKTVAVIALHRLRMVLGKQPNRTASFPCTVLLTLLLWATSFTLATLATLKTSKSHLCLPMSSLIAGKGKAILSLYVVDFTFCVAVVSVSYIMIAQTLRKNAQVRKCPPVITVDASRPQPFMGVPVQGGGDPIQCAMPALYRNQNYNKLQHVQTRGYTKSPNQLVTPAASRLQLVSAINLSTAKDSKAVVTCVIIVLSVLVCCLPLGISLVQVVLSSNGSFILYQFELFGFTLIFFKSGLNPFIYSRNSAGLRRKVLWCLQYIGLGFFCCKQKTRLRAMGKGNLEVNRNKSSHHETNSAYMLSPKPQKKFVDQACGPSHSKESMVSPKISAGHQHCGQSSSTPINTRIEPYYSIYNSSPSQEESSPCNLQPVNSFGFANSYIAMHYHTTNDLVQEYDSTSAKQIPVPSV.

Residues 1–15 show a composition bias toward polar residues; sequence MNSTGHLQDAPNATS. The interval 1–27 is disordered; the sequence is MNSTGHLQDAPNATSLHVPHSQEGNST. Residues 1–46 are Extracellular-facing; that stretch reads MNSTGHLQDAPNATSLHVPHSQEGNSTSLQEGLQDLIHTATLVTCT. N-linked (GlcNAc...) asparagine glycans are attached at residues asparagine 2, asparagine 12, and asparagine 25. Residues 47–67 traverse the membrane as a helical segment; it reads FLLAVIFCLGSYGNFIVFLSF. Residues 68-86 lie on the Cytoplasmic side of the membrane; it reads FDPAFRKFRTNFDFMILNL. The chain crosses the membrane as a helical span at residues 87 to 107; the sequence is SFCDLFICGVTAPMFTFVLFF. Topologically, residues 108–120 are extracellular; it reads SSASSIPDAFCFT. The helical transmembrane segment at 121–141 threads the bilayer; that stretch reads FHLTSSGFIIMSLKTVAVIAL. The Cytoplasmic segment spans residues 142 to 160; sequence HRLRMVLGKQPNRTASFPC. Residues 161 to 181 form a helical membrane-spanning segment; it reads TVLLTLLLWATSFTLATLATL. Over 182-205 the chain is Extracellular; sequence KTSKSHLCLPMSSLIAGKGKAILS. A helical transmembrane segment spans residues 206–226; that stretch reads LYVVDFTFCVAVVSVSYIMIA. The Cytoplasmic portion of the chain corresponds to 227-318; that stretch reads QTLRKNAQVR…INLSTAKDSK (92 aa). The chain crosses the membrane as a helical span at residues 319 to 339; it reads AVVTCVIIVLSVLVCCLPLGI. Topologically, residues 340–350 are extracellular; sequence SLVQVVLSSNG. A helical transmembrane segment spans residues 351-371; it reads SFILYQFELFGFTLIFFKSGL. The Cytoplasmic segment spans residues 372–540; sequence NPFIYSRNSA…SAKQIPVPSV (169 aa).

It belongs to the G-protein coupled receptor 1 family. In terms of tissue distribution, expressed at high levels in brain and spinal cord and at detectable levels in retinal pigment epithelium. In situ hybridization of adult eye sections localized transcripts only to the perivascular cells, surrounding retinal arterioles, in the ganglion cell/nerve fiber layer. Also expressed by islet cells (at protein level).

Its subcellular location is the cell membrane. G protein-coupled receptor that is activated by the chemokine CCL5/RANTES. Probably coupled to heterotrimeric Gq proteins, it stimulates inositol trisphosphate production and calcium mobilization upon activation. Together with CCL5/RANTES, may play a role in neuron survival through activation of a downstream signaling pathway involving the PI3, Akt and MAP kinases. CCL5/RANTES may also regulate insulin secretion by pancreatic islet cells through activation of this receptor. This chain is Probable G-protein coupled receptor 75 (GPR75), found in Homo sapiens (Human).